Consider the following 1035-residue polypeptide: Cell-division control histidine kinase PdhS (1035 aa).

The tract at residues 1–613 (MSGSYPFIDI…HADGSEEPVD (613 aa)) is important for polar localization. Positions 500 to 533 (QGLANTRAESETPVSETSSIEPVEPTPPVKTRSE) are disordered. Residues 614–1035 (AHLNAIAWRG…VFPPTRVLAD (422 aa)) are interaction with DivK. The PAS domain occupies 659 to 730 (HVEELKTILD…YLHGLSGNGV (72 aa)). The Histidine kinase domain occupies 802 to 1031 (RISHEIRTPL…VVEIVFPPTR (230 aa)). His-805 is subject to Phosphohistidine; by autocatalysis.

As to quaternary structure, interacts with DivK.

The protein resides in the cytoplasm. The enzyme catalyses ATP + protein L-histidine = ADP + protein N-phospho-L-histidine.. Functionally, functions as a polar differentiation marker. Essential protein that, by localizing in the old pole of dividing cells, controls cell division and maturation, probably through control of DivK phosphorylation status and cellular distribution, which in turn regulates CtrA, a transcriptional regulator of the minB operon. The asymmetrical localization of this protein is probably required for cells to enter a new division cycle. This chain is Cell-division control histidine kinase PdhS (pdhS), found in Brucella ovis (strain ATCC 25840 / 63/290 / NCTC 10512).